A 320-amino-acid polypeptide reads, in one-letter code: ATP-dependent 6-phosphofructokinase (320 aa).

Gly11 contributes to the ATP binding site. 21-25 (RAVVR) is an ADP binding site. Residues 72 to 73 (RC) and 102 to 105 (GDGS) contribute to the ATP site. Asp103 lines the Mg(2+) pocket. Substrate is bound at residue 125-127 (TID). Asp127 functions as the Proton acceptor in the catalytic mechanism. Residue Arg154 coordinates ADP. Substrate contacts are provided by residues Arg162 and 169 to 171 (MGR). Residues 185-187 (GAE) and 214-216 (KTH) each bind ADP. Residues Glu223, Arg244, and 250–253 (HIQR) contribute to the substrate site.

This sequence belongs to the phosphofructokinase type A (PFKA) family. ATP-dependent PFK group I subfamily. Prokaryotic clade 'B1' sub-subfamily. As to quaternary structure, homotetramer. The cofactor is Mg(2+).

The protein resides in the cytoplasm. It carries out the reaction beta-D-fructose 6-phosphate + ATP = beta-D-fructose 1,6-bisphosphate + ADP + H(+). Its pathway is carbohydrate degradation; glycolysis; D-glyceraldehyde 3-phosphate and glycerone phosphate from D-glucose: step 3/4. Its activity is regulated as follows. Allosterically activated by ADP and other diphosphonucleosides, and allosterically inhibited by phosphoenolpyruvate. Catalyzes the phosphorylation of D-fructose 6-phosphate to fructose 1,6-bisphosphate by ATP, the first committing step of glycolysis. The polypeptide is ATP-dependent 6-phosphofructokinase (Clostridium botulinum (strain Eklund 17B / Type B)).